A 976-amino-acid polypeptide reads, in one-letter code: Ephrin type-A receptor 2 (976 aa).

The first 23 residues, 1-23, serve as a signal peptide directing secretion; sequence MELWAARACFVLLWGCALAPATA. The tract at residues 1–206 is mediates interaction with CLDN4; sequence MELWAARACF…YYKKCPELLQ (206 aa). Over 25–537 the chain is Extracellular; sequence QGKEVVLLDF…SPEGSGSLAV (513 aa). Residues 28–206 form the Eph LBD domain; sequence EVVLLDFAAA…YYKKCPELLQ (179 aa). Cystine bridges form between cysteine 70–cysteine 188 and cysteine 105–cysteine 115. In terms of domain architecture, Fibronectin type-III 1 spans 328–432; it reads PPSAPHYLTA…TSRSFRTASV (105 aa). 2 N-linked (GlcNAc...) asparagine glycosylation sites follow: asparagine 407 and asparagine 435. Residues 438 to 529 form the Fibronectin type-III 2 domain; that stretch reads EPPKVRLEGR…KVHEFQTLSP (92 aa). A helical transmembrane segment spans residues 538–558; sequence IGGVAVCVVLLLLLAGAGFFI. Topologically, residues 559 to 976 are cytoplasmic; the sequence is HRRRKNLRAR…DQVNTVGIPI (418 aa). Position 570 is a phosphoserine (serine 570). Position 575 is a phosphotyrosine (tyrosine 575). Serine 579 is modified (phosphoserine). Tyrosine 588 is modified (phosphotyrosine; by autocatalysis). Tyrosine 594 is modified (phosphotyrosine). The interval 606–906 is mediates interaction with ARHGEF16; it reads TEIHPSCVTR…STSGSEGVPF (301 aa). One can recognise a Protein kinase domain in the interval 613-875; that stretch reads VTRQKVIGAG…DIVSILDKLI (263 aa). 619-627 provides a ligand contact to ATP; it reads IGAGEFGEV. The residue at position 628 (tyrosine 628) is a Phosphotyrosine. Lysine 646 is a binding site for ATP. Threonine 647 carries the post-translational modification Phosphothreonine. Tyrosine 735 is modified (phosphotyrosine; by autocatalysis). Aspartate 739 serves as the catalytic Proton acceptor. Position 772 is a phosphotyrosine (tyrosine 772). A phosphoserine mark is found at serine 869, serine 892, serine 897, and serine 901. A negatively regulates interaction with ARHGEF16 region spans residues 886–976; that stretch reads DFDPRVSIRL…DQVNTVGIPI (91 aa). Residues 904-968 form the SAM domain; it reads VPFRTVSEWL…AYSLLGLKDQ (65 aa). Tyrosine 921 is subject to Phosphotyrosine; by autocatalysis. A Phosphotyrosine modification is found at tyrosine 930. The short motif at 974–976 is the PDZ-binding element; it reads IPI.

This sequence belongs to the protein kinase superfamily. Tyr protein kinase family. Ephrin receptor subfamily. Homodimer. Interacts with SLA. Interacts (phosphorylated form) with VAV2, VAV3 and PI3-kinase p85 subunit (PIK3R1, PIK3R2 or PIK3R3); critical for the EFNA1-induced activation of RAC1 which stimulates cell migration. Interacts with INPPL1; regulates activated EPHA2 endocytosis and degradation. Interacts (inactivated form) with PTK2/FAK1 and interacts (EFNA1 ligand-activated form) with PTPN11; regulates integrin-mediated adhesion. Interacts with ARHGEF16, DOCK4 and ELMO2; mediates ligand-independent activation of RAC1 which stimulates cell migration. Interacts with CLDN4; phosphorylates CLDN4 and may regulate tight junctions. Interacts with ACP1. Interacts with ANKS1A. Interacts with CEMIP. Interacts with NCK1; may regulate EPHA2 activity in cell migration and adhesion. Interacts with TIMD4. Autophosphorylates. Phosphorylated on tyrosine upon binding and activation by EFNA1. Phosphorylated residues Tyr-588 and Tyr-594 are required for binding VAV2 and VAV3 while phosphorylated residues Tyr-735 and Tyr-930 are required for binding PI3-kinase p85 subunit (PIK3R1, PIK3R2 or PIK3R3). These phosphorylated residues are critical for recruitment of VAV2 and VAV3 and PI3-kinase p85 subunit which transduce downstream signaling to activate RAC1 GTPase and cell migration. Dephosphorylation of Tyr-930 by PTPRF prevents the interaction of EPHA2 with NCK1. Phosphorylated at Ser-897 by PKB; serum-induced phosphorylation which targets EPHA2 to the cell leading edge and stimulates cell migration. Phosphorylation by PKB is inhibited by EFNA1-activated EPHA2 which regulates PKB activity via a reciprocal regulatory loop. Phosphorylated at Ser-897 in response to TNF by RPS6KA1 and RPS6KA3; RPS6KA-EPHA2 signaling pathway controls cell migration. Phosphorylated at Ser-897 by PKA; blocks cell retraction induced by EPHA2 kinase activity. Dephosphorylated by ACP1. In terms of processing, ubiquitinated by CHIP/STUB1. Ubiquitination is regulated by the HSP90 chaperone and regulates the receptor stability and activity through proteasomal degradation. ANKS1A prevents ubiquitination and degradation.

It localises to the cell membrane. It is found in the cell projection. The protein resides in the ruffle membrane. The protein localises to the lamellipodium membrane. Its subcellular location is the cell junction. It localises to the focal adhesion. It carries out the reaction L-tyrosyl-[protein] + ATP = O-phospho-L-tyrosyl-[protein] + ADP + H(+). Receptor tyrosine kinase which binds promiscuously membrane-bound ephrin-A family ligands residing on adjacent cells, leading to contact-dependent bidirectional signaling into neighboring cells. The signaling pathway downstream of the receptor is referred to as forward signaling while the signaling pathway downstream of the ephrin ligand is referred to as reverse signaling. Activated by the ligand ephrin-A1/EFNA1 regulates migration, integrin-mediated adhesion, proliferation and differentiation of cells. Regulates cell adhesion and differentiation through DSG1/desmoglein-1 and inhibition of the ERK1/ERK2 signaling pathway. May also participate in UV radiation-induced apoptosis and have a ligand-independent stimulatory effect on chemotactic cell migration. During development, may function in distinctive aspects of pattern formation and subsequently in development of several fetal tissues. Involved for instance in angiogenesis, in early hindbrain development and epithelial proliferation and branching morphogenesis during mammary gland development. Engaged by the ligand ephrin-A5/EFNA5 may regulate lens fiber cells shape and interactions and be important for lens transparency development and maintenance. With ephrin-A2/EFNA2 may play a role in bone remodeling through regulation of osteoclastogenesis and osteoblastogenesis. The protein is Ephrin type-A receptor 2 (EPHA2) of Macaca fascicularis (Crab-eating macaque).